We begin with the raw amino-acid sequence, 251 residues long: Lactose phosphotransferase system repressor (251 aa).

One can recognise an HTH deoR-type domain in the interval 3 to 58; the sequence is KHERLDEIAKLVNKKGTIRTNEIVEGLNVSDMTVRRDLIELENKGILTKIHGGARS. A DNA-binding region (H-T-H motif) is located at residues 20-39; the sequence is IRTNEIVEGLNVSDMTVRRD.

In terms of biological role, repressor of the lactose catabolism operon. Galactose-6-phosphate is the inducer. This Staphylococcus aureus (strain N315) protein is Lactose phosphotransferase system repressor (lacR).